The following is a 376-amino-acid chain: N-acetyldiaminopimelate deacetylase (376 aa).

Residue Asp69 is part of the active site. Glu128 acts as the Proton acceptor in catalysis.

This sequence belongs to the peptidase M20A family. N-acetyldiaminopimelate deacetylase subfamily.

It carries out the reaction N-acetyl-(2S,6S)-2,6-diaminopimelate + H2O = (2S,6S)-2,6-diaminopimelate + acetate. It functions in the pathway amino-acid biosynthesis; L-lysine biosynthesis via DAP pathway; LL-2,6-diaminopimelate from (S)-tetrahydrodipicolinate (acetylase route): step 3/3. Functionally, catalyzes the conversion of N-acetyl-diaminopimelate to diaminopimelate and acetate. This Bacillus anthracis (strain A0248) protein is N-acetyldiaminopimelate deacetylase.